The chain runs to 623 residues: Transketolase (623 aa).

Position 1 is an N-acetylmethionine (M1). Position 3 is a phosphoserine (S3). N6-acetyllysine is present on residues K6 and K11. H37 lines the substrate pocket. 2 residues coordinate thiamine diphosphate: S40 and H77. S104 is modified (phosphoserine). Thiamine diphosphate is bound at residue 123–125 (GSL). The residue at position 144 (K144) is an N6-acetyllysine. A Mg(2+)-binding site is contributed by D155. Positions 156 and 185 each coordinate thiamine diphosphate. Mg(2+) is bound by residues N185 and L187. 3 positions are modified to N6-acetyllysine: K204, K232, and K241. Residues K244 and H258 each coordinate thiamine diphosphate. H258 is a binding site for substrate. N6-acetyllysine is present on K260. Residue Y275 is modified to Phosphotyrosine. A Phosphothreonine modification is found at T287. S295 carries the post-translational modification Phosphoserine. Substrate is bound by residues R318 and S345. At S345 the chain carries Phosphoserine. K352 participates in a covalent cross-link: Glycyl lysine isopeptide (Lys-Gly) (interchain with G-Cter in SUMO2). The active-site Proton donor is E366. F392 contacts thiamine diphosphate. Positions 416 and 424 each coordinate substrate. Q428 provides a ligand contact to thiamine diphosphate. Residue R474 coordinates substrate. Residues K538 and K603 each carry the N6-acetyllysine modification.

The protein belongs to the transketolase family. As to quaternary structure, homodimer. Mg(2+) is required as a cofactor. Requires Ca(2+) as cofactor. Mn(2+) serves as cofactor. It depends on Co(2+) as a cofactor. The cofactor is thiamine diphosphate.

The enzyme catalyses D-sedoheptulose 7-phosphate + D-glyceraldehyde 3-phosphate = aldehydo-D-ribose 5-phosphate + D-xylulose 5-phosphate. Its function is as follows. Catalyzes the transfer of a two-carbon ketol group from a ketose donor to an aldose acceptor, via a covalent intermediate with the cofactor thiamine pyrophosphate. The protein is Transketolase (TKT) of Homo sapiens (Human).